A 1432-amino-acid chain; its full sequence is Superkiller protein 3 (1432 aa).

2 TPR repeats span residues 4-37 (IKQL…DPDN) and 47-80 (ALSS…VPDN). The disordered stretch occupies residues 339-397 (SANKPPEGHKKTEKETDIKDVDETNEDEVKDRVEDEVKDRVEDEVKDQDEEAKEDEEED). The segment covering 344 to 381 (PEGHKKTEKETDIKDVDETNEDEVKDRVEDEVKDRVED) has biased composition (basic and acidic residues). Acidic residues predominate over residues 382 to 397 (EVKDQDEEAKEDEEED). TPR repeat units follow at residues 425 to 458 (ILAH…IAYN), 471 to 507 (REFS…DFSN), 508 to 541 (IQAK…SPNN), 627 to 661 (APGF…DAGD), 702 to 735 (NWPF…DPND), 736 to 769 (VESW…RPSH), 945 to 985 (ASYW…QSNT), 987 to 1018 (ETWI…EPKA), and 1226 to 1259 (ISNH…SKDS).

The protein belongs to the SKI3 family. Component of the SKI complex composed of at least SKI2, SKI3 and SKI8. The SKI complex interacts with SKI7, which makes the link between the SKI complex and the exosome in order to perform mRNA degradation.

It localises to the cytoplasm. It is found in the nucleus. In terms of biological role, component of the SKI complex involved in 3'-mRNA degradation pathway. Represses dsRNA virus propagation by specifically blocking translation of viral mRNAs, perhaps recognizing the absence of CAP or poly(A). Essential for cell growth only in the presence of M1 replicon. This chain is Superkiller protein 3 (SKI3), found in Saccharomyces cerevisiae (strain ATCC 204508 / S288c) (Baker's yeast).